The chain runs to 479 residues: NADH dehydrogenase [ubiquinone] flavoprotein 1, mitochondrial (479 aa).

103-112 (GRGGAGFPSG) provides a ligand contact to NADH. 216 to 264 (RGAGAYICGEETALIESIEGKQGKPRLKPPFPAMAGLYGCPTTVTNVET) contacts FMN. The [4Fe-4S] cluster site is built by cysteine 396, cysteine 399, cysteine 402, and cysteine 442.

It belongs to the complex I 51 kDa subunit family. Complex I is composed of about 45 different subunits. This is a component of the flavoprotein-sulfur (FP) fragment of the enzyme. FMN serves as cofactor. [4Fe-4S] cluster is required as a cofactor.

It is found in the mitochondrion inner membrane. It catalyses the reaction a ubiquinone + NADH + 5 H(+)(in) = a ubiquinol + NAD(+) + 4 H(+)(out). Functionally, core subunit of the mitochondrial membrane respiratory chain NADH dehydrogenase (Complex I) that is believed to belong to the minimal assembly required for catalysis. Complex I functions in the transfer of electrons from NADH to the respiratory chain. The immediate electron acceptor for the enzyme is believed to be ubiquinone. This chain is NADH dehydrogenase [ubiquinone] flavoprotein 1, mitochondrial (ndufv1), found in Dictyostelium discoideum (Social amoeba).